A 339-amino-acid polypeptide reads, in one-letter code: Anthranilate phosphoribosyltransferase (339 aa).

5-phospho-alpha-D-ribose 1-diphosphate is bound by residues glycine 81, 84 to 85 (GD), threonine 89, 91 to 94 (NVST), 109 to 117 (KHGNRSVSS), and serine 121. Glycine 81 contributes to the anthranilate binding site. A Mg(2+)-binding site is contributed by serine 93. Asparagine 112 contacts anthranilate. Anthranilate is bound at residue arginine 167. Mg(2+)-binding residues include aspartate 226 and glutamate 227.

The protein belongs to the anthranilate phosphoribosyltransferase family. In terms of assembly, homodimer. It depends on Mg(2+) as a cofactor.

It carries out the reaction N-(5-phospho-beta-D-ribosyl)anthranilate + diphosphate = 5-phospho-alpha-D-ribose 1-diphosphate + anthranilate. It participates in amino-acid biosynthesis; L-tryptophan biosynthesis; L-tryptophan from chorismate: step 2/5. Its function is as follows. Catalyzes the transfer of the phosphoribosyl group of 5-phosphorylribose-1-pyrophosphate (PRPP) to anthranilate to yield N-(5'-phosphoribosyl)-anthranilate (PRA). This chain is Anthranilate phosphoribosyltransferase, found in Persephonella marina (strain DSM 14350 / EX-H1).